Here is a 258-residue protein sequence, read N- to C-terminus: Phosphatidylglycerol--prolipoprotein diacylglyceryl transferase (258 aa).

The next 7 helical transmembrane spans lie at 9-29 (ILIQ…ATGF), 53-73 (LLTY…TLIY), 90-110 (EGGL…WLFV), 117-139 (KFLW…IRLG), 169-189 (PVQL…LMLF), 198-218 (GFLF…IEYF), and 230-250 (LISV…VLML). Arg-137 contributes to the a 1,2-diacyl-sn-glycero-3-phospho-(1'-sn-glycerol) binding site.

It belongs to the Lgt family.

The protein localises to the cell inner membrane. The enzyme catalyses L-cysteinyl-[prolipoprotein] + a 1,2-diacyl-sn-glycero-3-phospho-(1'-sn-glycerol) = an S-1,2-diacyl-sn-glyceryl-L-cysteinyl-[prolipoprotein] + sn-glycerol 1-phosphate + H(+). It participates in protein modification; lipoprotein biosynthesis (diacylglyceryl transfer). Its function is as follows. Catalyzes the transfer of the diacylglyceryl group from phosphatidylglycerol to the sulfhydryl group of the N-terminal cysteine of a prolipoprotein, the first step in the formation of mature lipoproteins. In Tolumonas auensis (strain DSM 9187 / NBRC 110442 / TA 4), this protein is Phosphatidylglycerol--prolipoprotein diacylglyceryl transferase.